We begin with the raw amino-acid sequence, 149 residues long: Urease accessory protein UreE (149 aa).

This sequence belongs to the UreE family.

It is found in the cytoplasm. In terms of biological role, involved in urease metallocenter assembly. Binds nickel. Probably functions as a nickel donor during metallocenter assembly. In Synechococcus sp. (strain JA-3-3Ab) (Cyanobacteria bacterium Yellowstone A-Prime), this protein is Urease accessory protein UreE.